The following is a 312-amino-acid chain: Phosphoribosylglycinamide formyltransferase, chloroplastic (312 aa).

A chloroplast-targeting transit peptide spans 1–73 (MEAQQIISRF…EVCSSSWRIW (73 aa)). 109–111 (GSN) serves as a coordination point for N(1)-(5-phospho-beta-D-ribosyl)glycinamide. (6R)-10-formyltetrahydrofolate-binding positions include lysine 162, 187 to 190 (LKLI), and asparagine 204. The Proton donor role is filled by histidine 206. Position 247 (aspartate 247) interacts with (6R)-10-formyltetrahydrofolate. N(1)-(5-phospho-beta-D-ribosyl)glycinamide is bound at residue glutamate 276.

The protein belongs to the GART family.

It is found in the plastid. The protein resides in the chloroplast. It carries out the reaction N(1)-(5-phospho-beta-D-ribosyl)glycinamide + (6R)-10-formyltetrahydrofolate = N(2)-formyl-N(1)-(5-phospho-beta-D-ribosyl)glycinamide + (6S)-5,6,7,8-tetrahydrofolate + H(+). It participates in purine metabolism; IMP biosynthesis via de novo pathway; N(2)-formyl-N(1)-(5-phospho-D-ribosyl)glycinamide from N(1)-(5-phospho-D-ribosyl)glycinamide (10-formyl THF route): step 1/1. This Vigna unguiculata (Cowpea) protein is Phosphoribosylglycinamide formyltransferase, chloroplastic (PUR3).